Here is a 251-residue protein sequence, read N- to C-terminus: Triosephosphate isomerase (251 aa).

12–14 (NWK) contributes to the substrate binding site. The active-site Electrophile is the H99. The active-site Proton acceptor is E169. Residues G175, S214, and 235-236 (GG) each bind substrate.

The protein belongs to the triosephosphate isomerase family. Homodimer.

The protein resides in the cytoplasm. It catalyses the reaction D-glyceraldehyde 3-phosphate = dihydroxyacetone phosphate. It participates in carbohydrate biosynthesis; gluconeogenesis. Its pathway is carbohydrate degradation; glycolysis; D-glyceraldehyde 3-phosphate from glycerone phosphate: step 1/1. Involved in the gluconeogenesis. Catalyzes stereospecifically the conversion of dihydroxyacetone phosphate (DHAP) to D-glyceraldehyde-3-phosphate (G3P). The polypeptide is Triosephosphate isomerase (Bradyrhizobium sp. (strain BTAi1 / ATCC BAA-1182)).